The chain runs to 214 residues: Coiled-coil domain-containing protein 169 (214 aa).

Residues 30–144 (EMLQMSTFEL…IEQEAKAYYK (115 aa)) are a coiled coil. Residues 161–214 (VTQEAAKKQQSDPAHATREKPAFKAKYNGLAKRRTMTKRRGGMTKGSHPSNMKH) form a disordered region. The span at 165–182 (AAKKQQSDPAHATREKPA) shows a compositional bias: basic and acidic residues. A compositionally biased stretch (basic residues) spans 191–202 (AKRRTMTKRRGG).

The protein belongs to the CCDC169 family.

The protein is Coiled-coil domain-containing protein 169 (ccdc169) of Xenopus laevis (African clawed frog).